A 214-amino-acid polypeptide reads, in one-letter code: Nascent polypeptide-associated complex subunit alpha (214 aa).

Residues 1–80 (MPGEATETVP…SEKKARKAMS (80 aa)) are disordered. Residues 29-40 (SDSDDSPPELEQ) are compositionally biased toward acidic residues. A compositionally biased stretch (low complexity) spans 41 to 56 (DSTQTTTQQAQLAAAA). The 66-residue stretch at 69–134 (SRSEKKARKA…AKIEDLSQQA (66 aa)) folds into the NAC-A/B domain. The UBA domain maps to 175-212 (VEVKDIELVMSQANVSRAKAVRALKNNSNDIVNAIMEL).

It belongs to the NAC-alpha family.

May promote appropriate targeting of ribosome-nascent polypeptide complexes. This Xenopus tropicalis (Western clawed frog) protein is Nascent polypeptide-associated complex subunit alpha (naca).